A 248-amino-acid polypeptide reads, in one-letter code: MGQTWSPLTHAGAREAIALACRVLAHRGLADGILGHISLRIGENSLLVRCRGPQERGLAFTEASDIRLVDLDGNPAAEGELEGGYSAPNELPLHTELLRQRPDINAVVHAHPPRVVAADLAGLGIRPIVGAFDIPGTRLAAGGVPVYPRGVLVRNRQLAAEMLHAMGDRPVVLLRGHGLTSAAGSVEQAVLQAISVDTLAGLSLQVTSAGGALKDLPDSDMAELPDLGGSFNTQTAWRHELARISAAW.

The active-site Proton donor/acceptor is glutamate 90. Glutamate 90, histidine 109, histidine 111, and histidine 177 together coordinate a divalent metal cation.

It belongs to the aldolase class II family. Requires a divalent metal cation as cofactor.

It catalyses the reaction 3,4-dihydroxyphthalate + H(+) = 3,4-dihydroxybenzoate + CO2. The protein operates within xenobiotic degradation; phthalate degradation. Catalyzes the decarboxylation of 3,4-dihydroxyphthalate to protocatechuate (3,4-dihydroxybenzoate) during phthalate metabolism. The protein is 3,4-dihydroxyphthalate decarboxylase of Arthrobacter keyseri.